We begin with the raw amino-acid sequence, 343 residues long: Tribbles homolog 2 (343 aa).

Positions 25-50 (EELSSIRSAEPSQSFSPNLGSPSPPE) are disordered. Over residues 29 to 45 (SIRSAEPSQSFSPNLGS) the composition is skewed to polar residues. The 248-residue stretch at 61–308 (IGKYLLLEPL…SQEILDHPWF (248 aa)) folds into the Protein kinase domain.

This sequence belongs to the protein kinase superfamily. CAMK Ser/Thr protein kinase family. Tribbles subfamily.

The protein resides in the cytoplasm. The protein localises to the cytoskeleton. Interacts with MAPK kinases and regulates activation of MAP kinases. Does not display kinase activity. The chain is Tribbles homolog 2 from Mus musculus (Mouse).